Reading from the N-terminus, the 1288-residue chain is Photoreceptor cilium actin regulator (1288 aa).

Glycine 2 carries N-myristoyl glycine lipidation. A lipid anchor (S-palmitoyl cysteine) is attached at cysteine 3. Disordered regions lie at residues 78–147 (MGDP…KWKR), 368–401 (QTSWDLAPEPEEWKSVTSPHTEARQSGHTWQQSP), 423–453 (QPRAQDEARSPCLSSTSPENITSPPLKLGTS), 467–527 (PHLS…PFQA), 563–605 (DWSE…SHVE), 686–707 (QKCNPHPEDEQGKAGKLPNAIP), 813–1109 (AAKS…EDSQ), 1132–1169 (EAKPPLSTAHPLTPPSLPPEAGGPLGNPAECWKNSSGP), and 1190–1288 (LRRT…EEVS). Composition is skewed to polar residues over residues 96-109 (TKTSSSQLNKSQSH), 382-401 (SVTSPHTEARQSGHTWQQSP), and 434-453 (CLSSTSPENITSPPLKLGTS). A compositionally biased stretch (acidic residues) spans 483 to 495 (DSEDSSPEEEEED). Composition is skewed to polar residues over residues 848 to 857 (SPESSKSTEN), 894 to 904 (SKSTASLTKPH), 927 to 946 (PPATSQSPEVKGGTWSQAEK), and 966 to 976 (PSGQNRTSESS). Residues 1018–1028 (PAQPSPSAVQT) are compositionally biased toward low complexity. 2 stretches are compositionally biased toward pro residues: residues 1051 to 1063 (PHQPKLPNPPPES) and 1071 to 1094 (PSPPTQHPEASPPFSIPSPSPPMS). A compositionally biased stretch (basic and acidic residues) spans 1097 to 1106 (QEHKETRDSE). The span at 1209 to 1226 (DPTSTSYESQLGQNSSSE) shows a compositional bias: polar residues. A compositionally biased stretch (basic and acidic residues) spans 1268–1277 (RTGHIQDKSQ). Residues 1278–1288 (PEAQPQQEEVS) are compositionally biased toward polar residues.

As to expression, specifically expressed in retina.

The protein localises to the cell projection. Its subcellular location is the cilium. It is found in the photoreceptor outer segment. It localises to the photoreceptor inner segment. Its function is as follows. Plays an essential role for normal photoreceptor cell maintenance and vision. The polypeptide is Photoreceptor cilium actin regulator (Homo sapiens (Human)).